The sequence spans 129 residues: V-type proton ATPase subunit F 2 (129 aa).

This sequence belongs to the V-ATPase F subunit family. In terms of assembly, V-ATPase is a heteromultimeric enzyme made up of two complexes: the ATP-hydrolytic V1 complex and the proton translocation V0 complex. The V1 complex consists of three catalytic AB heterodimers that form a heterohexamer, three peripheral stalks each consisting of EG heterodimers, one central rotor including subunits D and F, and the regulatory subunits C and H. The proton translocation complex V0 consists of the proton transport subunit a, a ring of proteolipid subunits c9c'', rotary subunit d, subunits e and f, and the accessory subunits VhaAC45 and ATP6AP2.

Its function is as follows. Subunit of the V1 complex of vacuolar(H+)-ATPase (V-ATPase), a multisubunit enzyme composed of a peripheral complex (V1) that hydrolyzes ATP and a membrane integral complex (V0) that translocates protons. V-ATPase is responsible for acidifying and maintaining the pH of intracellular compartments and in some cell types, is targeted to the plasma membrane, where it is responsible for acidifying the extracellular environment. This Drosophila melanogaster (Fruit fly) protein is V-type proton ATPase subunit F 2 (Vha14-2).